We begin with the raw amino-acid sequence, 1168 residues long: MEKEELNKLNHLSLVSNVCNELETHLGSAEKVLAEFIIDLGRHSETVDEFDKNLKEAGAEMPDYFVRSLLTTIHGIYPPKPKSEKKKEEGDDQKFKGLAIKDTKDKVKELEKEIEREAEERRREEDRNRDRDRRESGRDRDRDRNRDRDDRRDRHRDRERNRGDEEGEDRRSDRRHRERGRGDGGEGEDRRRDRRAKDEYVEEDKGGANEPELYQVYKGRVTRVMDAGCFVQFDKFRGKEGLVHVSQMATRRVDKAKEFVKRDMEVYVKVISISSDKYSLSMRDVDQNTGRDLIPLRKPSDEDDSSRSNPSYRTKDGQVTKTGISGIRIVEENDVAPSRRPLKKMSSPERWEAKQLIASGVLRVDEFPMYDEDGDGMLYQEEGAEEELEIEMNEDEPAFLQGQTRYSVDMSPVKIFKNPEGSLSRAAALQSALTKERREMREQQQRTMLDSIPKDLNRPWEDPMPETGERHLAQELRGVGLSAYDMPEWKKDAFGKTPTFGQRSKLSIQEQRESLPIYKLKKELIQAVHDNQVLVVIGETGSGKTTQVTQYLAEAGYTTKGKIGCTQPRRVAAMSVAKRVAEEFGCRLGEEVGYAIRFEDCTGPDTVIKYMTDGMLLREILIDENLSQYSVIMLDEAHERTIHTDVLFGLLKKLMKRRLDLRLIVTSATLDAEKFSGYFFNCNIFTIPGRTFPVEILYTKQPETDYLDAALITVLQIHLTEPEGDILVFLTGQEEIDSACQSLYERMKGLGKNVPELIILPVYSALPSEMQSRIFDPPPPGKRKVVVATNIAEASLTIDGIYYVVDPGFAKQNVYNPKQGLESLVITPISQASAKQRAGRAGRTGPGKCYRLYTESAYRNEMPPTSIPEIQRINLGMTTLTMKAMGINDLLSFDFMDPPQPQALISAMEQLYSLGALDEEGLLTKLGRKMAEFPLEPPLSKMLLASVDLGCSDEILTMIAMIQTGNIFYRPREKQAQADQKRAKFFQPEGDHLTLLAVYEAWKAKNFSGPWCFENFIQSRSLRRAQDVRKQLLSIMDKYKLDVVTAGKNFTKIRKAITAGFFFHGARKDPQEGYRTLVENQPVYIHPSSALFQRQPDWVIYHDLVMTTKEYMREVTVIDPKWLVELAPRFFKVSDPTKMSKRKRQERIEPLYDRYHEPNSWRLSKRRA.

The tract at residues 76-206 (IYPPKPKSEK…KDEYVEEDKG (131 aa)) is disordered. 2 stretches are compositionally biased toward basic and acidic residues: residues 81–172 (PKSE…DRRS) and 180–206 (GRGD…EDKG). In terms of domain architecture, S1 motif spans 214–283 (YQVYKGRVTR…SSDKYSLSMR (70 aa)). Positions 289-326 (TGRDLIPLRKPSDEDDSSRSNPSYRTKDGQVTKTGISG) are disordered. Phosphoserine is present on Ser411. A Helicase ATP-binding domain is found at 525 to 688 (IQAVHDNQVL…FFNCNIFTIP (164 aa)). An ATP-binding site is contributed by 538-545 (GETGSGKT). The short motif at 635–638 (DEAH) is the DEAH box element. The Helicase C-terminal domain maps to 706–886 (YLDAALITVL…MTTLTMKAMG (181 aa)).

This sequence belongs to the DEAD box helicase family. DEAH subfamily. PRP22 sub-subfamily.

It localises to the nucleus. It carries out the reaction ATP + H2O = ADP + phosphate + H(+). Functionally, may be involved in pre-mRNA splicing. The sequence is that of Probable pre-mRNA-splicing factor ATP-dependent RNA helicase DEAH5 from Arabidopsis thaliana (Mouse-ear cress).